The primary structure comprises 794 residues: DNA ligase (794 aa).

NAD(+) is bound by residues 35–39 (DAEYD), 84–85 (SL), and Glu126. Catalysis depends on Lys128, which acts as the N6-AMP-lysine intermediate. Arg149, Glu186, Lys302, and Lys326 together coordinate NAD(+). Zn(2+) is bound by residues Cys420, Cys423, Cys450, and Cys456. The BRCT domain maps to 711 to 794 (VEGLPLAGQT…KLFDEHGVAR (84 aa)).

The protein belongs to the NAD-dependent DNA ligase family. LigA subfamily. Requires Mg(2+) as cofactor. Mn(2+) is required as a cofactor.

It catalyses the reaction NAD(+) + (deoxyribonucleotide)n-3'-hydroxyl + 5'-phospho-(deoxyribonucleotide)m = (deoxyribonucleotide)n+m + AMP + beta-nicotinamide D-nucleotide.. DNA ligase that catalyzes the formation of phosphodiester linkages between 5'-phosphoryl and 3'-hydroxyl groups in double-stranded DNA using NAD as a coenzyme and as the energy source for the reaction. It is essential for DNA replication and repair of damaged DNA. In Pseudomonas aeruginosa (strain LESB58), this protein is DNA ligase.